The following is a 709-amino-acid chain: DNA ligase (709 aa).

Residues 34-38 (DAEYD), 83-84 (SL), and glutamate 115 contribute to the NAD(+) site. Residue lysine 117 is the N6-AMP-lysine intermediate of the active site. Arginine 138, glutamate 185, lysine 301, and lysine 325 together coordinate NAD(+). 4 residues coordinate Zn(2+): cysteine 419, cysteine 422, cysteine 437, and cysteine 443. In terms of domain architecture, BRCT spans 602 to 691 (RQSDTLAGKT…AEPPPSPPPP (90 aa)). A disordered region spans residues 679 to 709 (GTTAEPPPSPPPPPPETNTDGNQLLLPLDGE). Residues 683-694 (EPPPSPPPPPPE) are compositionally biased toward pro residues.

It belongs to the NAD-dependent DNA ligase family. LigA subfamily. Mg(2+) serves as cofactor. Requires Mn(2+) as cofactor.

It catalyses the reaction NAD(+) + (deoxyribonucleotide)n-3'-hydroxyl + 5'-phospho-(deoxyribonucleotide)m = (deoxyribonucleotide)n+m + AMP + beta-nicotinamide D-nucleotide.. Functionally, DNA ligase that catalyzes the formation of phosphodiester linkages between 5'-phosphoryl and 3'-hydroxyl groups in double-stranded DNA using NAD as a coenzyme and as the energy source for the reaction. It is essential for DNA replication and repair of damaged DNA. This chain is DNA ligase, found in Chloroflexus aurantiacus (strain ATCC 29364 / DSM 637 / Y-400-fl).